A 402-amino-acid polypeptide reads, in one-letter code: Speedy protein E21 (402 aa).

The interval 1 to 90 (MDRTETRFRK…EPEKELAPEP (90 aa)) is disordered. Residues 16–39 (GKITTSRQLHPQNEQSPQRSTSGY) show a composition bias toward polar residues. Over residues 76-90 (DESEEEPEKELAPEP) the composition is skewed to acidic residues.

It belongs to the Speedy/Ringo family.

In Homo sapiens (Human), this protein is Speedy protein E21.